We begin with the raw amino-acid sequence, 237 residues long: 7-cyano-7-deazaguanine synthase (237 aa).

Residue 10-20 (FSGGQDSTTCL) coordinates ATP. Zn(2+) contacts are provided by cysteine 189, cysteine 198, cysteine 201, and cysteine 204.

The protein belongs to the QueC family. Zn(2+) serves as cofactor.

It catalyses the reaction 7-carboxy-7-deazaguanine + NH4(+) + ATP = 7-cyano-7-deazaguanine + ADP + phosphate + H2O + H(+). The protein operates within purine metabolism; 7-cyano-7-deazaguanine biosynthesis. Catalyzes the ATP-dependent conversion of 7-carboxy-7-deazaguanine (CDG) to 7-cyano-7-deazaguanine (preQ(0)). In Aeromonas salmonicida (strain A449), this protein is 7-cyano-7-deazaguanine synthase.